Reading from the N-terminus, the 588-residue chain is 2-succinyl-5-enolpyruvyl-6-hydroxy-3-cyclohexene-1-carboxylate synthase (588 aa).

The disordered stretch occupies residues 1-22; it reads MTTTGSLPAQPSSTSPRTGNPS.

The protein belongs to the TPP enzyme family. MenD subfamily. Homodimer. The cofactor is Mg(2+). Requires Mn(2+) as cofactor. Thiamine diphosphate is required as a cofactor.

It carries out the reaction isochorismate + 2-oxoglutarate + H(+) = 5-enolpyruvoyl-6-hydroxy-2-succinyl-cyclohex-3-ene-1-carboxylate + CO2. Its pathway is quinol/quinone metabolism; 1,4-dihydroxy-2-naphthoate biosynthesis; 1,4-dihydroxy-2-naphthoate from chorismate: step 2/7. It functions in the pathway quinol/quinone metabolism; menaquinone biosynthesis. Catalyzes the thiamine diphosphate-dependent decarboxylation of 2-oxoglutarate and the subsequent addition of the resulting succinic semialdehyde-thiamine pyrophosphate anion to isochorismate to yield 2-succinyl-5-enolpyruvyl-6-hydroxy-3-cyclohexene-1-carboxylate (SEPHCHC). This Clavibacter michiganensis subsp. michiganensis (strain NCPPB 382) protein is 2-succinyl-5-enolpyruvyl-6-hydroxy-3-cyclohexene-1-carboxylate synthase.